We begin with the raw amino-acid sequence, 558 residues long: Urease subunit alpha 2 (558 aa).

The Urease domain maps to 129–558; that stretch reads GAVDTHVHLL…SVSLNRLYFL (430 aa). 3 residues coordinate Ni(2+): His134, His136, and Lys214. N6-carboxylysine is present on Lys214. A substrate-binding site is contributed by His216. Positions 243 and 269 each coordinate Ni(2+). His317 acts as the Proton donor in catalysis. A Ni(2+)-binding site is contributed by Asp357.

The protein belongs to the metallo-dependent hydrolases superfamily. Urease alpha subunit family. In terms of assembly, may form a heterohexamer of 3 UreC (alpha) and 3 UreAB (gamma/beta) subunits. May also form a heterotrimer of UreA (gamma), UreB (beta) and UreC (alpha) subunits. Three heterotrimers associate to form the active enzyme. Ni cation serves as cofactor. Post-translationally, carboxylation allows a single lysine to coordinate two nickel ions.

It is found in the cytoplasm. The catalysed reaction is urea + 2 H2O + H(+) = hydrogencarbonate + 2 NH4(+). It functions in the pathway nitrogen metabolism; urea degradation; CO(2) and NH(3) from urea (urease route): step 1/1. The sequence is that of Urease subunit alpha 2 from Streptomyces coelicolor (strain ATCC BAA-471 / A3(2) / M145).